Consider the following 126-residue polypeptide: Fatty acid-binding protein, liver (126 aa).

Alanine 2 bears the N-acetylalanine mark.

The protein belongs to the calycin superfamily. Fatty-acid binding protein (FABP) family.

The protein localises to the cytoplasm. Binds free fatty acids and their coenzyme A derivatives, bilirubin, and some other small molecules in the cytoplasm. May be involved in intracellular lipid transport. This Schroederichthys bivius (Narrowmouthed catshark) protein is Fatty acid-binding protein, liver (fabp1).